Here is a 147-residue protein sequence, read N- to C-terminus: Transmembrane protein 210 (147 aa).

The first 31 residues, 1–31, serve as a signal peptide directing secretion; the sequence is MAPGPWPVSCLRGGPLGLTYLSLLLIPAAAG. The Extracellular portion of the chain corresponds to 32–47; that stretch reads TYCECSLGLSREALIA. Residues 48-68 form a helical membrane-spanning segment; sequence LLVVLAGISASCFCALVIVAI. Residues 69–147 lie on the Cytoplasmic side of the membrane; that stretch reads GVLRAKGETC…PPPPPPLPPE (79 aa). The tract at residues 128 to 147 is disordered; the sequence is AIPMEASSEEPPPPPPLPPE. Residues 137–147 show a composition bias toward pro residues; that stretch reads EPPPPPPLPPE.

Its subcellular location is the membrane. The protein localises to the cytoplasmic vesicle. The protein resides in the secretory vesicle. It localises to the acrosome. The polypeptide is Transmembrane protein 210 (TMEM210) (Homo sapiens (Human)).